We begin with the raw amino-acid sequence, 495 residues long: Keratin, type II cytoskeletal 74 (495 aa).

The tract at residues 1–105 (MASCHTAGHR…DPEIQKVRAQ (105 aa)) is head. A coil 1A region spans residues 106–141 (EREQIKALNDKFASFIDKVRFLEQQNQVLQTKWELL). Positions 106-419 (EREQIKALND…KLLEGEENRM (314 aa)) constitute an IF rod domain. The segment at 142 to 160 (QQLDLSNCRRNLEPVYEAH) is linker 1. The interval 161-252 (ISNLRKQLEM…CLYDEEISQL (92 aa)) is coil 1B. A linker 12 region spans residues 253–276 (QTHASETSVILSMDNNRDLDLAGI). The coil 2 stretch occupies residues 277–415 (IAEVRAHYED…ATYRKLLEGE (139 aa)). A tail region spans residues 416–495 (ENRMSGENPS…AAGTLARKTT (80 aa)). The interval 449–495 (DSEAGNAVGSPSTPRNSQSKTRGSSVDPRDAQDESAAAAGTLARKTT) is disordered. The segment covering 457–472 (GSPSTPRNSQSKTRGS) has biased composition (polar residues).

This sequence belongs to the intermediate filament family. As to quaternary structure, heterotetramer of two type I and two type II keratins. Expressed in epidermis with a particularly strong staining in the nail matrix, nail bed and hyponychium (at protein level).

In terms of biological role, has a role in hair formation. Specific component of keratin intermediate filaments in the inner root sheath (IRS) of the hair follicle. The chain is Keratin, type II cytoskeletal 74 from Mus musculus (Mouse).